The primary structure comprises 323 residues: Mas-related G-protein coupled receptor member X1 (323 aa).

At 1–30 (MDPTISSLSTESTTLNKTGHPSCRPILTLS) the chain is on the extracellular side. N16 carries an N-linked (GlcNAc...) asparagine glycan. A helical transmembrane segment spans residues 31–51 (FLVPIITLLGLAGNTIVLWLL). Topologically, residues 52 to 59 (GFRMRRKA) are cytoplasmic. The chain crosses the membrane as a helical span at residues 60-80 (ISVYVLNLSLADSFFLCCHFI). Residues 81 to 100 (DSLMRIMNFYGIYAHKLSKE) are Extracellular-facing. The chain crosses the membrane as a helical span at residues 101–121 (ILGNAAIIPYISGLSILSAIS). Topologically, residues 122-143 (TERCLSVLWPIWYHCHRPRNMS) are cytoplasmic. Residues 144–164 (AIICVLIWVLSFLMGILDWFF) traverse the membrane as a helical segment. Residues 165 to 180 (SGFLGETHHHLWKNVD) lie on the Extracellular side of the membrane. Residues 181 to 201 (FIVTAFLIFLFMLLFGSSLAL) traverse the membrane as a helical segment. Residues 202-226 (LVRILCGSRRKPLSRLYVTISLTVM) lie on the Cytoplasmic side of the membrane. Residues 227–247 (VYLICGLPLGLYLFLLYWFGI) form a helical membrane-spanning segment. Residues 248 to 258 (HLHYPFCHIYQ) lie on the Extracellular side of the membrane. The chain crosses the membrane as a helical span at residues 259–279 (VTVLLSCVNSSANPIIYFLVG). The Cytoplasmic portion of the chain corresponds to 280–323 (SFRHRKKHRSLKMVLKRALEETPEEDEYTDSHVQKPTEISERRC).

This sequence belongs to the G-protein coupled receptor 1 family. Mas subfamily. Uniquely localized in a subset of small dorsal root and trigeminal sensory neurons. Associated preferentially with IB4 class of small-diameter somatosensory afferents (also known as nociceptors).

It is found in the cell membrane. Orphan receptor activated by neuropeptides terminating in Arg-Phe or Arg-Phe-amide. Mediates its action by association with G proteins that activate a phosphatidylinositol-calcium second messenger system. Its effect is mediated by G(q) and G(11) proteins. May regulate the function of nociceptive neurons by modulation of pain perception. The chain is Mas-related G-protein coupled receptor member X1 (Mrgprx1) from Rattus norvegicus (Rat).